Consider the following 177-residue polypeptide: Small ribosomal subunit protein uS4 (177 aa).

One can recognise an S4 RNA-binding domain in the interval 104–168 (RRLQTLVFRK…SPMASESHPE (65 aa)). The segment at 157–177 (PNSPMASESHPERTDSVKDAE) is disordered. Residues 165-177 (SHPERTDSVKDAE) show a composition bias toward basic and acidic residues.

This sequence belongs to the universal ribosomal protein uS4 family. In terms of assembly, part of the 30S ribosomal subunit. Contacts protein S5. The interaction surface between S4 and S5 is involved in control of translational fidelity.

Functionally, one of the primary rRNA binding proteins, it binds directly to 16S rRNA where it nucleates assembly of the body of the 30S subunit. With S5 and S12 plays an important role in translational accuracy. In Methanococcus aeolicus (strain ATCC BAA-1280 / DSM 17508 / OCM 812 / Nankai-3), this protein is Small ribosomal subunit protein uS4.